The chain runs to 600 residues: Proline--tRNA ligase (600 aa).

It belongs to the class-II aminoacyl-tRNA synthetase family. ProS type 1 subfamily. Homodimer.

The protein localises to the cytoplasm. It catalyses the reaction tRNA(Pro) + L-proline + ATP = L-prolyl-tRNA(Pro) + AMP + diphosphate. Its function is as follows. Catalyzes the attachment of proline to tRNA(Pro) in a two-step reaction: proline is first activated by ATP to form Pro-AMP and then transferred to the acceptor end of tRNA(Pro). As ProRS can inadvertently accommodate and process non-cognate amino acids such as alanine and cysteine, to avoid such errors it has two additional distinct editing activities against alanine. One activity is designated as 'pretransfer' editing and involves the tRNA(Pro)-independent hydrolysis of activated Ala-AMP. The other activity is designated 'posttransfer' editing and involves deacylation of mischarged Ala-tRNA(Pro). The misacylated Cys-tRNA(Pro) is not edited by ProRS. This Prochlorococcus marinus (strain AS9601) protein is Proline--tRNA ligase.